We begin with the raw amino-acid sequence, 318 residues long: uncharacterized protein (318 aa).

Positions 19 to 63 (VPPDARHHEPRPGMTDHPDTGNGIGLTGRPPRAIPDPAPRSSHGP) are disordered. A compositionally biased stretch (basic and acidic residues) spans 21 to 37 (PDARHHEPRPGMTDHPD). Position 72–79 (72–79 (QKGGVGKT)) interacts with ATP.

Belongs to the ParA family.

May play a role in septum formation. This is an uncharacterized protein from Mycobacterium tuberculosis (strain CDC 1551 / Oshkosh).